The chain runs to 101 residues: Interleukin-8 (101 aa).

The signal sequence occupies residues 1–22; it reads MTSKLAVALLAAFLLSAALCEA. 2 disulfide bridges follow: Cys-34/Cys-61 and Cys-36/Cys-77.

The protein belongs to the intercrine alpha (chemokine CxC) family. Homodimer. Interacts with TNFAIP6 (via Link domain); this interaction interferes with chemokine binding to glycosaminoglycans.

The protein resides in the secreted. Chemotactic factor that mediates inflammatory response by attracting neutrophils, basophils, and T-cells to clear pathogens and protect the host from infection. Also plays an important role in neutrophil activation. Released in response to an inflammatory stimulus, exerts its effect by binding to the G-protein-coupled receptors CXCR1 and CXCR2, primarily found in neutrophils, monocytes and endothelial cells. G-protein heterotrimer (alpha, beta, gamma subunits) constitutively binds to CXCR1/CXCR2 receptor and activation by IL8 leads to beta and gamma subunits release from Galpha (GNAI2 in neutrophils) and activation of several downstream signaling pathways including PI3K and MAPK pathways. The polypeptide is Interleukin-8 (CXCL8) (Bos taurus (Bovine)).